Consider the following 153-residue polypeptide: Ribonuclease H (153 aa).

The RNase H type-1 domain occupies 1–141 (MKKIQLFTDG…CDDLARRAAE (141 aa)). 4 residues coordinate Mg(2+): D9, E47, D69, and D133.

The protein belongs to the RNase H family. Monomer. Mg(2+) serves as cofactor.

Its subcellular location is the cytoplasm. The catalysed reaction is Endonucleolytic cleavage to 5'-phosphomonoester.. Endonuclease that specifically degrades the RNA of RNA-DNA hybrids. The protein is Ribonuclease H of Psychromonas ingrahamii (strain DSM 17664 / CCUG 51855 / 37).